Reading from the N-terminus, the 323-residue chain is Glyoxylate/hydroxypyruvate reductase B (323 aa).

Residues Arg-237 and Glu-266 contribute to the active site. His-285 serves as the catalytic Proton donor.

Belongs to the D-isomer specific 2-hydroxyacid dehydrogenase family. GhrB subfamily. Homodimer.

The protein localises to the cytoplasm. It carries out the reaction glycolate + NADP(+) = glyoxylate + NADPH + H(+). The enzyme catalyses (R)-glycerate + NAD(+) = 3-hydroxypyruvate + NADH + H(+). It catalyses the reaction (R)-glycerate + NADP(+) = 3-hydroxypyruvate + NADPH + H(+). Functionally, catalyzes the NADPH-dependent reduction of glyoxylate and hydroxypyruvate into glycolate and glycerate, respectively. The sequence is that of Glyoxylate/hydroxypyruvate reductase B from Klebsiella pneumoniae (strain 342).